The chain runs to 368 residues: Ribulose bisphosphate carboxylase-like protein 1 (368 aa).

It belongs to the RuBisCO large chain family. Type IV subfamily.

Functionally, unknown. Probably does not have RuBisCO activity. This chain is Ribulose bisphosphate carboxylase-like protein 1 (rlp1), found in Rhodopseudomonas palustris (strain ATCC BAA-98 / CGA009).